Reading from the N-terminus, the 243-residue chain is Triosephosphate isomerase (243 aa).

Substrate is bound at residue 9–11 (NWK). His-96 serves as the catalytic Electrophile. Catalysis depends on Glu-165, which acts as the Proton acceptor. Substrate-binding positions include Gly-171, Ser-204, and 225–226 (GG).

The protein belongs to the triosephosphate isomerase family. Homodimer.

It localises to the cytoplasm. The catalysed reaction is D-glyceraldehyde 3-phosphate = dihydroxyacetone phosphate. Its pathway is carbohydrate biosynthesis; gluconeogenesis. It participates in carbohydrate degradation; glycolysis; D-glyceraldehyde 3-phosphate from glycerone phosphate: step 1/1. In terms of biological role, involved in the gluconeogenesis. Catalyzes stereospecifically the conversion of dihydroxyacetone phosphate (DHAP) to D-glyceraldehyde-3-phosphate (G3P). The polypeptide is Triosephosphate isomerase (Prochlorococcus marinus (strain MIT 9211)).